A 448-amino-acid polypeptide reads, in one-letter code: Keratin, type I cytoskeletal 27 (448 aa).

The segment at 1-73 is head; it reads MSVRFSSASR…ANEHGLLSGN (73 aa). The interval 74–109 is coil 1A; that stretch reads EKVTMQNLNDRLASYLENVQALEEANADLEQKIKDW. An IF rod domain is found at 74 to 389; sequence EKVTMQNLND…RLIDGDEGSC (316 aa). The linker 1 stretch occupies residues 110 to 131; sequence YEKFGPGSCRGLDHDYSRYFPI. A coil 1B region spans residues 132-223; the sequence is IDDLRTQIIS…KNHEEEMQAL (92 aa). The tract at residues 224 to 246 is linker 12; that stretch reads QCAAGGNVNVEMNAAPGVDLTVL. The segment at 247–385 is coil 2; it reads LNNMRAEYEA…ETYCRLIDGD (139 aa). A tail region spans residues 386–448; that stretch reads EGSCVKAKGQ…VNKTEQRIPS (63 aa). Residues 427-448 are disordered; that stretch reads SRVHTLEEKSTKVNKTEQRIPS. Residues 430–448 are compositionally biased toward basic and acidic residues; the sequence is HTLEEKSTKVNKTEQRIPS.

It belongs to the intermediate filament family. As to quaternary structure, heterotetramer of two type I and two type II keratins. Interacts with KRT6A to form filaments. In terms of tissue distribution, expressed in skin. Expressed in the Henle layer and cuticle of the irs in hair follicle bulb. In the hair follicle, expression was observed in all layers of the irs but was stronger in the Henle layer and cuticle than the Huxley layer until the Henle layer differentiated (at protein level).

It localises to the cytoplasm. Functionally, essential for the proper assembly of type I and type II keratin protein complexes and formation of keratin intermediate filaments in the inner root sheath (irs). The sequence is that of Keratin, type I cytoskeletal 27 from Mus musculus (Mouse).